A 133-amino-acid polypeptide reads, in one-letter code: Large ribosomal subunit protein uL22 (133 aa).

Belongs to the universal ribosomal protein uL22 family. As to quaternary structure, part of the 50S ribosomal subunit.

Its function is as follows. This protein binds specifically to 23S rRNA; its binding is stimulated by other ribosomal proteins, e.g. L4, L17, and L20. It is important during the early stages of 50S assembly. It makes multiple contacts with different domains of the 23S rRNA in the assembled 50S subunit and ribosome. In terms of biological role, the globular domain of the protein is located near the polypeptide exit tunnel on the outside of the subunit, while an extended beta-hairpin is found that lines the wall of the exit tunnel in the center of the 70S ribosome. The protein is Large ribosomal subunit protein uL22 of Borrelia garinii subsp. bavariensis (strain ATCC BAA-2496 / DSM 23469 / PBi) (Borreliella bavariensis).